A 97-amino-acid chain; its full sequence is Defensin-like protein 301 (97 aa).

The first 24 residues, 1-24 (MEKVTSIFFVLLLISSCLILRSQG), serve as a signal peptide directing secretion. Cystine bridges form between Cys28–Cys47, Cys34–Cys53, Cys39–Cys55, Cys65–Cys84, Cys71–Cys92, and Cys76–Cys94.

It belongs to the DEFL family.

The protein localises to the secreted. This chain is Defensin-like protein 301, found in Arabidopsis thaliana (Mouse-ear cress).